Here is a 60-residue protein sequence, read N- to C-terminus: Waprin-Lio1 (60 aa).

Residues 1-8 (MLLGTTSA) form the signal peptide. The WAP domain occupies 9 to 59 (QVVRPGSCPNVDVPIPPLGLCRTTCQTDANCQEGRKCCKNGCGFMTCETAR). Disulfide bonds link cysteine 16-cysteine 46, cysteine 29-cysteine 50, cysteine 33-cysteine 45, and cysteine 39-cysteine 55.

It belongs to the venom waprin family. In terms of tissue distribution, expressed by the venom gland.

The protein localises to the secreted. Its function is as follows. Damages membranes of susceptible bacteria. Has no hemolytic activity. Not toxic to mice. Does not inhibit the proteinases elastase and cathepsin G. The polypeptide is Waprin-Lio1 (Erythrolamprus poecilogyrus (Water snake)).